The chain runs to 100 residues: Urease subunit gamma (100 aa).

This sequence belongs to the urease gamma subunit family. Heterotrimer of UreA (gamma), UreB (beta) and UreC (alpha) subunits. Three heterotrimers associate to form the active enzyme.

The protein resides in the cytoplasm. It carries out the reaction urea + 2 H2O + H(+) = hydrogencarbonate + 2 NH4(+). Its pathway is nitrogen metabolism; urea degradation; CO(2) and NH(3) from urea (urease route): step 1/1. The sequence is that of Urease subunit gamma from Nocardia farcinica (strain IFM 10152).